A 229-amino-acid chain; its full sequence is Potassium/proton antiporter CemA (229 aa).

The next 4 membrane-spanning stretches (helical) occupy residues 11 to 31 (TTPF…SLFF), 118 to 138 (IISF…LVIL), 158 to 178 (LLAL…ELLI), and 190 to 210 (LLVC…TFNY).

The protein belongs to the CemA family.

It localises to the plastid. The protein resides in the chloroplast inner membrane. It catalyses the reaction K(+)(in) + H(+)(out) = K(+)(out) + H(+)(in). In terms of biological role, contributes to K(+)/H(+) antiport activity by supporting proton efflux to control proton extrusion and homeostasis in chloroplasts in a light-dependent manner to modulate photosynthesis. Prevents excessive induction of non-photochemical quenching (NPQ) under continuous-light conditions. Indirectly promotes efficient inorganic carbon uptake into chloroplasts. The protein is Potassium/proton antiporter CemA of Pelargonium hortorum (Common geranium).